Here is a 432-residue protein sequence, read N- to C-terminus: MDARWWAVVVLAAFPSLGAGGETPEAPPESWTQLWFFRFVVNAAGYASFMVPGYLLVQYFRRKNYLETGRGLCFPLVKACVFGNEPKASDEVPLAPRTEAAETTPMWQALKLLFCATGLQVSYLTWGVLQERVMTRSYGATATSPGERFTDSQFLVLMNRVLALIVAGLSCVLCKQPRHGAPMYRYSFASLSNVLSSWCQYEALKFVSFPTQVLAKASKVIPVMLMGKLVSRRSYEHWEYLTATLISIGVSMFLLSSGPEPRSSPATTLSGLILLAGYIAFDSFTSNWQDALFAYKMSSVQMMFGVNFFSCLFTVGSLLEQGALLEGTRFMGRHSEFAAHALLLSICSACGQLFIFYTIGQFGAAVFTIIMTLRQAFAILLSCLLYGHTVTVVGGLGVAVVFAALLLRVYARGRLKQRGKKAVPVESPVQKV.

9 consecutive transmembrane segments (helical) span residues 5–25 (WWAV…ETPE), 40–60 (VVNA…VQYF), 109–129 (ALKL…WGVL), 154–174 (FLVL…CVLC), 238–258 (WEYL…LSSG), 265–285 (PATT…DSFT), 299–319 (SVQM…GSLL), 353–373 (LFIF…IMTL), and 387–407 (GHTV…ALLL). Serine 427 carries the phosphoserine modification.

The protein belongs to the nucleotide-sugar transporter family. SLC35B subfamily. In terms of tissue distribution, highly expressed in the placenta, pancreas, mammary gland and skeletal muscle. Weakly or not expressed in colon, heart and prostate. Expressed in the brain, predominantly in frontal lobe gray matter, subcortical frontal white matter and cerebellum.

It localises to the golgi apparatus membrane. The catalysed reaction is 3'-phosphoadenylyl sulfate(in) + adenosine 3',5'-bisphosphate(out) = 3'-phosphoadenylyl sulfate(out) + adenosine 3',5'-bisphosphate(in). In terms of biological role, probably functions as a 3'-phosphoadenylyl sulfate:adenosine 3',5'-bisphosphate antiporter at the Golgi membranes. Mediates the transport from the cytosol into the lumen of the Golgi of 3'-phosphoadenylyl sulfate/adenosine 3'-phospho 5'-phosphosulfate (PAPS), a universal sulfuryl donor for sulfation events that take place in that compartment. This chain is Adenosine 3'-phospho 5'-phosphosulfate transporter 1, found in Homo sapiens (Human).